A 359-amino-acid chain; its full sequence is DNA polymerase IV (359 aa).

Residues 4 to 185 form the UmuC domain; the sequence is IIHIDMDCYF…LSLRKIPGVG (182 aa). 2 residues coordinate Mg(2+): aspartate 8 and aspartate 103. Glutamate 104 is a catalytic residue.

Belongs to the DNA polymerase type-Y family. In terms of assembly, monomer. Requires Mg(2+) as cofactor.

It localises to the cytoplasm. It catalyses the reaction DNA(n) + a 2'-deoxyribonucleoside 5'-triphosphate = DNA(n+1) + diphosphate. Functionally, poorly processive, error-prone DNA polymerase involved in untargeted mutagenesis. Copies undamaged DNA at stalled replication forks, which arise in vivo from mismatched or misaligned primer ends. These misaligned primers can be extended by PolIV. Exhibits no 3'-5' exonuclease (proofreading) activity. May be involved in translesional synthesis, in conjunction with the beta clamp from PolIII. The chain is DNA polymerase IV from Shewanella sp. (strain MR-7).